Consider the following 221-residue polypeptide: tRNA (guanine-N(7)-)-methyltransferase (221 aa).

S-adenosyl-L-methionine contacts are provided by E51, E76, D103, and D125. D125 is a catalytic residue. Substrate is bound by residues K129 and D161.

Belongs to the class I-like SAM-binding methyltransferase superfamily. TrmB family.

It catalyses the reaction guanosine(46) in tRNA + S-adenosyl-L-methionine = N(7)-methylguanosine(46) in tRNA + S-adenosyl-L-homocysteine. The protein operates within tRNA modification; N(7)-methylguanine-tRNA biosynthesis. Its function is as follows. Catalyzes the formation of N(7)-methylguanine at position 46 (m7G46) in tRNA. This Wolbachia pipientis wMel protein is tRNA (guanine-N(7)-)-methyltransferase.